The chain runs to 505 residues: Acetyl-coenzyme A carboxylase carboxyl transferase subunit beta, chloroplastic (505 aa).

Positions 189 to 205 are enriched in low complexity; it reads ESVSNSKSGSSSIRTGG. The segment at 189-213 is disordered; it reads ESVSNSKSGSSSIRTGGNSSDFNRR. The 272-residue stretch at 228–499 folds into the CoA carboxyltransferase N-terminal domain; sequence LWVQCENCYG…NQNSSRALGS (272 aa). Cysteine 232, cysteine 235, cysteine 251, and cysteine 254 together coordinate Zn(2+). A C4-type zinc finger spans residues 232-254; the sequence is CENCYGLNYKKFVSFKMHICEQC.

This sequence belongs to the AccD/PCCB family. As to quaternary structure, acetyl-CoA carboxylase is a heterohexamer composed of biotin carboxyl carrier protein, biotin carboxylase and 2 subunits each of ACCase subunit alpha and ACCase plastid-coded subunit beta (accD). Zn(2+) is required as a cofactor.

Its subcellular location is the plastid. The protein localises to the chloroplast stroma. It catalyses the reaction N(6)-carboxybiotinyl-L-lysyl-[protein] + acetyl-CoA = N(6)-biotinyl-L-lysyl-[protein] + malonyl-CoA. Its pathway is lipid metabolism; malonyl-CoA biosynthesis; malonyl-CoA from acetyl-CoA: step 1/1. In terms of biological role, component of the acetyl coenzyme A carboxylase (ACC) complex. Biotin carboxylase (BC) catalyzes the carboxylation of biotin on its carrier protein (BCCP) and then the CO(2) group is transferred by the transcarboxylase to acetyl-CoA to form malonyl-CoA. The protein is Acetyl-coenzyme A carboxylase carboxyl transferase subunit beta, chloroplastic of Calycanthus floridus var. glaucus (Eastern sweetshrub).